Consider the following 311-residue polypeptide: Ribonuclease Z (311 aa).

H61, H63, D65, H66, H137, D207, and H263 together coordinate Zn(2+). D65 acts as the Proton acceptor in catalysis.

The protein belongs to the RNase Z family. Homodimer. The cofactor is Zn(2+).

It carries out the reaction Endonucleolytic cleavage of RNA, removing extra 3' nucleotides from tRNA precursor, generating 3' termini of tRNAs. A 3'-hydroxy group is left at the tRNA terminus and a 5'-phosphoryl group is left at the trailer molecule.. Zinc phosphodiesterase, which displays some tRNA 3'-processing endonuclease activity. Probably involved in tRNA maturation, by removing a 3'-trailer from precursor tRNA. The protein is Ribonuclease Z of Thermococcus onnurineus (strain NA1).